Here is an 80-residue protein sequence, read N- to C-terminus: RNA-binding protein KhpA (80 aa).

One can recognise a KH domain in the interval 33-80; it reads GRTVEVHVHPDDLGKVIGRGGRTATALRKLVAGIGGRGIRVDVVDTDQ.

Belongs to the KhpA RNA-binding protein family.

It localises to the cytoplasm. A probable RNA-binding protein. The protein is RNA-binding protein KhpA of Mycobacterium leprae (strain TN).